A 352-amino-acid chain; its full sequence is S-adenosylmethionine:tRNA ribosyltransferase-isomerase (352 aa).

The protein belongs to the QueA family. In terms of assembly, monomer.

Its subcellular location is the cytoplasm. The catalysed reaction is 7-aminomethyl-7-carbaguanosine(34) in tRNA + S-adenosyl-L-methionine = epoxyqueuosine(34) in tRNA + adenine + L-methionine + 2 H(+). It functions in the pathway tRNA modification; tRNA-queuosine biosynthesis. Functionally, transfers and isomerizes the ribose moiety from AdoMet to the 7-aminomethyl group of 7-deazaguanine (preQ1-tRNA) to give epoxyqueuosine (oQ-tRNA). This chain is S-adenosylmethionine:tRNA ribosyltransferase-isomerase, found in Paraburkholderia phytofirmans (strain DSM 17436 / LMG 22146 / PsJN) (Burkholderia phytofirmans).